Consider the following 422-residue polypeptide: Proline--tRNA ligase (422 aa).

It belongs to the class-II aminoacyl-tRNA synthetase family. ProS type 2 subfamily. Homodimer.

Its subcellular location is the cytoplasm. The catalysed reaction is tRNA(Pro) + L-proline + ATP = L-prolyl-tRNA(Pro) + AMP + diphosphate. Functionally, catalyzes the attachment of proline to tRNA(Pro) in a two-step reaction: proline is first activated by ATP to form Pro-AMP and then transferred to the acceptor end of tRNA(Pro). The chain is Proline--tRNA ligase from Wolbachia pipientis wMel.